Here is a 179-residue protein sequence, read N- to C-terminus: Large ribosomal subunit protein uL5 (179 aa).

This sequence belongs to the universal ribosomal protein uL5 family. In terms of assembly, part of the 50S ribosomal subunit; part of the 5S rRNA/L5/L18/L25 subcomplex. Contacts the 5S rRNA and the P site tRNA. Forms a bridge to the 30S subunit in the 70S ribosome.

Functionally, this is one of the proteins that bind and probably mediate the attachment of the 5S RNA into the large ribosomal subunit, where it forms part of the central protuberance. In the 70S ribosome it contacts protein S13 of the 30S subunit (bridge B1b), connecting the 2 subunits; this bridge is implicated in subunit movement. Contacts the P site tRNA; the 5S rRNA and some of its associated proteins might help stabilize positioning of ribosome-bound tRNAs. The sequence is that of Large ribosomal subunit protein uL5 from Pseudomonas syringae pv. tomato (strain ATCC BAA-871 / DC3000).